Reading from the N-terminus, the 87-residue chain is Costars family protein (87 aa).

It belongs to the costars family.

The chain is Costars family protein from Oryza sativa subsp. indica (Rice).